We begin with the raw amino-acid sequence, 166 residues long: Phospholipase A2 inhibitor clone 05 (166 aa).

The first 19 residues, 1–19 (MRLILLSSLLLLGIFLADG), serve as a signal peptide directing secretion. One can recognise a C-type lectin domain in the interval 46-161 (LKGAFLTVHR…CDDNLLVVCE (116 aa)). 2 cysteine pairs are disulfide-bonded: Cys-83/Cys-160 and Cys-138/Cys-152. Asn-122 is a glycosylation site (N-linked (GlcNAc...) asparagine).

It belongs to the alpha-type phospholipase A2 inhibitor family. Homotrimer; non-covalently linked. As to expression, expressed by the liver.

It localises to the secreted. Functionally, this phospholipase A2 inhibitor binds directly phospholipase A2 in the presence or absence of calcium. This is Phospholipase A2 inhibitor clone 05 from Bothrops moojeni (Lance-headed viper).